Reading from the N-terminus, the 101-residue chain is MAKGQSLQDPFLNALRRERVPVSIYLVNGIKLQGQVESFDQFVILLKNTVSQMVYKHAISTVVPSRPVSHHSNNPSGSTNNYHGSNPSAPQQPQQDSDDAE.

One can recognise a Sm domain in the interval 9-68; sequence DPFLNALRRERVPVSIYLVNGIKLQGQVESFDQFVILLKNTVSQMVYKHAISTVVPSRPV. Residues 63 to 101 form a disordered region; sequence VPSRPVSHHSNNPSGSTNNYHGSNPSAPQQPQQDSDDAE. A compositionally biased stretch (polar residues) spans 70–86; the sequence is HHSNNPSGSTNNYHGSN.

It belongs to the Hfq family. As to quaternary structure, homohexamer.

Its function is as follows. RNA chaperone that binds small regulatory RNA (sRNAs) and mRNAs to facilitate mRNA translational regulation in response to envelope stress, environmental stress and changes in metabolite concentrations. Also binds with high specificity to tRNAs. Positively regulates the expression of the yst gene for heat-stable enterotoxin (Y-ST). The protein is RNA-binding protein Hfq of Yersinia enterocolitica.